Here is a 152-residue protein sequence, read N- to C-terminus: MVEVPGSVGTTASLSLRLGQMVLAFGSLLFMTIGVRFYQFTAFCYLVTIMSLAIPWNLTLAMVDIYCVILQQPFQKPRILLAISIGDWVVSVLALASASSAASVVDILRSNESSCPPTICNRYQFAATLAFLTWFLSLSSSLFNLWLLPSLI.

Residues methionine 1–arginine 17 are Cytoplasmic-facing. The helical transmembrane segment at leucine 18–tyrosine 38 threads the bilayer. The Extracellular segment spans residues glutamine 39–alanine 42. The chain crosses the membrane as a helical span at residues phenylalanine 43 to valine 63. Over aspartate 64 to arginine 78 the chain is Cytoplasmic. Residues isoleucine 79–serine 99 form a helical membrane-spanning segment. The Extracellular segment spans residues serine 100 to threonine 128. N-linked (GlcNAc...) asparagine glycosylation occurs at asparagine 111. A helical transmembrane segment spans residues leucine 129 to proline 149. At serine 150–isoleucine 152 the chain is on the cytoplasmic side.

It belongs to the Casparian strip membrane proteins (CASP) family. Homodimer and heterodimers. In terms of tissue distribution, expressed in the floral organ abscission zone and flower buds.

It localises to the cell membrane. The sequence is that of CASP-like protein 5C3 from Arabidopsis thaliana (Mouse-ear cress).